Consider the following 246-residue polypeptide: MKYDIIGDIHGCLQEFQNLTEKLGYNWSSGLPIHPDQRKLAFVGDITDRGPHSLRMIEIVWELVIHKKVAYYAPGNHCNKLYRFFLGRNVTIAHGLETTVAEYEALPSHKQNMIKEKFITLYEQSPLYHVLDEKRLLVCHAGIRQDYIGRQDKKVQTFVLYGDITGEKHADGSPVRRDWAKEYKGTTWIVYGHTPVKEPRFVNHTVNIDTGAVFGGKLTGLRYPEMETVSVPSSLPFVPEKFRPIS.

Belongs to the PrpE family. It depends on Ni(2+) as a cofactor.

The catalysed reaction is P(1),P(4)-bis(5'-guanosyl) tetraphosphate + H2O = GMP + GTP + 2 H(+). In terms of biological role, asymmetrically hydrolyzes Ap4p to yield AMP and ATP. The chain is Bis(5'-nucleosyl)-tetraphosphatase PrpE [asymmetrical] from Bacillus thuringiensis subsp. konkukian (strain 97-27).